The chain runs to 384 residues: Omega-6 fatty acid desaturase, endoplasmic reticulum (384 aa).

Positions M1–R23 are disordered. The span at K14–R23 shows a compositional bias: basic and acidic residues. Transmembrane regions (helical) follow at residues L56–L76 and V84–A104. A Histidine box-1 motif is present at residues H105–H109. A helical transmembrane segment spans residues W117–W137. The short motif at H141–H145 is the Histidine box-2 element. Helical transmembrane passes span V180 to G200, I226 to A246, and V253 to L273. The Histidine box-3 signature appears at H316–H320.

The protein belongs to the fatty acid desaturase type 1 family.

It localises to the endoplasmic reticulum membrane. The protein operates within lipid metabolism; polyunsaturated fatty acid biosynthesis. Functionally, ER (microsomal) omega-6 fatty acid desaturase introduces the second double bond in the biosynthesis of 18:3 fatty acids, important constituents of plant membranes. It is thought to use cytochrome b5 as an electron donor and to act on fatty acids esterified to phosphatidylcholine and, possibly, other phospholipids. The polypeptide is Omega-6 fatty acid desaturase, endoplasmic reticulum (Brassica juncea (Indian mustard)).